A 1049-amino-acid chain; its full sequence is Self-sufficient cytochrome P450 monooxygenase CYP505E4 (1049 aa).

A heme-binding site is contributed by Cys405. The segment covering 461 to 470 (SATALSQHNM) has biased composition (polar residues). The interval 461–491 (SATALSQHNMSAGATASPGSSTHLAGDENGQ) is disordered. Over residues 471 to 482 (SAGATASPGSST) the composition is skewed to low complexity. The Flavodoxin-like domain maps to 499–640 (ISFFYGSNSG…DLEVWEETNL (142 aa)). FMN contacts are provided by residues 505–509 (SNSGT) and 584–616 (VFGC…TRLT). One can recognise an FAD-binding FR-type domain in the interval 678–906 (RDLVEGKVTA…RPAKDAFHLP (229 aa)).

This sequence in the N-terminal section; belongs to the cytochrome P450 family. It depends on FAD as a cofactor. FMN is required as a cofactor. The cofactor is heme.

It catalyses the reaction 2 oxidized [cytochrome P450] + NADPH = 2 reduced [cytochrome P450] + NADP(+) + H(+). The enzyme catalyses an organic molecule + reduced [NADPH--hemoprotein reductase] + O2 = an alcohol + oxidized [NADPH--hemoprotein reductase] + H2O + H(+). The catalysed reaction is dodecanoate + reduced [NADPH--hemoprotein reductase] + O2 = 5-hydroxydodecanoate + oxidized [NADPH--hemoprotein reductase] + H2O + H(+). It carries out the reaction dodecan-1-ol + reduced [NADPH--hemoprotein reductase] + O2 = 1,5-dodecanediol + oxidized [NADPH--hemoprotein reductase] + H2O + H(+). It catalyses the reaction dodecanoate + reduced [NADPH--hemoprotein reductase] + O2 = 9-hydroxydodecanoate + oxidized [NADPH--hemoprotein reductase] + H2O + H(+). The enzyme catalyses dodecan-1-ol + reduced [NADPH--hemoprotein reductase] + O2 = 1,4-dodecanediol + oxidized [NADPH--hemoprotein reductase] + H2O + H(+). The catalysed reaction is dodecan-1-ol + reduced [NADPH--hemoprotein reductase] + O2 = 1,6-dodecanediol + oxidized [NADPH--hemoprotein reductase] + H2O + H(+). In terms of biological role, self-sufficient cytochrome P450 monooxygenase that catalyzes the regioselective in-chain hydroxylation of alkanes, fatty alcohols, and fatty acids at the omega-7 position. Performs hydroxylation of C10-C16 n-alkanes and C12 and C14 fatty alcohols; and thereby enables the one step biocatalytic synthesis of rare alcohols such as 5-dodecanol and 7-tetradecanol. Converts 1-dodecanol into 1,5-dodecanediol as major product with very little sub-terminally hydroxylated products with the 1,4-dodecanediol and 1,6-dodecanediol more abundant. Converts dodecanoic acid to 5-hydroxydodecanoic acid which can be further converted into delta-dodecalactone by lactonization of the 5-hydroxy acid at low pH. Also gives sub-terminal hydroxylation of dodecanoic acid with 9-hydroxydodecanoic acid being the second most abundant product. Does not show any significant activity toward tetradecanoic acid. This Penicillium camemberti (strain FM 013) protein is Self-sufficient cytochrome P450 monooxygenase CYP505E4.